Consider the following 662-residue polypeptide: MGLYRIRVSTGASLYAGSNNQVQLWLVGQHGEAALGTRLWPARGKETELKVEVPEYLGPLLFVKLRKRHLLTDDAWFCNWISVQGPGAGDEVRFPCYRWVEGNGVLSLPEGTGRTVGDDPQGLFQKHREEELEERRKLYRWGNWKDGLILNVAGAKLCDLPVDERFLEDKRVDFEVSLAKGLADLAIKDSLNVLTCWKDLDDFNRIFWCGQSKLAERVRDSWKEDALFGYQFLNGANPVVLRRSVHLPARLVFPPGMEELQAQLEKELEGGTLFEADFSLLDGIKANVILCSQQHLAAPLVMLKLQPDGKLLPMVIQLQLPSTGSPPPPLFLPTDPPMAWLLAKCWVRSSDFQLHELQSHLLRGHLMAEVIVVATMRCLPSIHPIFKLIIPHLRYTLEINVRARTGLVSDMGIFDQIMSTGGGGHVQLLKQAGAFLTYSSFCPPDDLADRGLLGVKSSFYAQDALRLWEIIYRYVEGIVSLHYKTDVAVKDDPELQTWCREITEIGLQGAQDRGFPVSLQSRDQVCHFVTMCIFTCTGQHASVHLGQLDWYSWVPNAPCTMRLPPPTTKDATLETVMATLPNFHQASLQMSITWQLGRRQPVMVAVGQHEEEYFSGPEPKAVLKKFREELAALDKEIEIRNAKLDMPYEYLRPSIVENSVAI.

The region spanning 2–114 (GLYRIRVSTG…VLSLPEGTGR (113 aa)) is the PLAT domain. Residues 115–662 (TVGDDPQGLF…PSIVENSVAI (548 aa)) enclose the Lipoxygenase domain. Residues His360, His365, His540, His544, and Ile662 each contribute to the Fe cation site.

Belongs to the lipoxygenase family. Interacts with PEBP1; in response to IL13/interleukin-13, prevents the interaction of PEBP1 with RAF1 to activate the ERK signaling cascade. Fe cation serves as cofactor.

It localises to the cytoplasm. Its subcellular location is the cytosol. The protein resides in the cell membrane. The protein localises to the lipid droplet. The catalysed reaction is (5Z,8Z,11Z,14Z)-eicosatetraenoate + O2 = (12S)-hydroperoxy-(5Z,8Z,10E,14Z)-eicosatetraenoate. The enzyme catalyses (9Z,12Z)-octadecadienoate + O2 = (13S)-hydroperoxy-(9Z,11E)-octadecadienoate. It catalyses the reaction (5Z,8Z,11Z,14Z)-eicosatetraenoate + O2 = (15S)-hydroperoxy-(5Z,8Z,11Z,13E)-eicosatetraenoate. It carries out the reaction (5Z,8Z,11Z,14Z)-eicosatetraenoate + 2 O2 = (14R,15S)-dihydroperoxy-(5Z,8Z,10E,12E)-eicosatetraenoate. The catalysed reaction is (5Z,8Z,11Z,14Z)-eicosatetraenoate + 2 O2 = (8S,15S)-dihydroperoxy-(5Z,9E,11Z,13E)-eicosatetraenoate. The enzyme catalyses (14S,15R)-epoxy-(5Z,8Z,11Z)-eicosatrienoate + O2 = (8S)-hydroperoxy-(14S,15R)-epoxy-(5Z,9E,11Z)-eicosatrienoate. It catalyses the reaction (14S,15R)-epoxy-(5Z,8Z,11Z)-eicosatrienoate + O2 = (12S)-hydroperoxy-(14S,15R)-epoxy-(5Z,8Z,10E)-eicosatrienoate. It carries out the reaction (14R,15S)-epoxy-(5Z,8Z,11Z)-eicosatrienoate + O2 = (5S)-hydroperoxy-(14R,15S)-epoxy-(6E,8Z,11Z)-eicosatrienoate. The catalysed reaction is (14R,15S)-epoxy-(5Z,8Z,11Z)-eicosatrienoate + O2 = (12S)-hydroperoxy-(14R,15S)-epoxy-(5Z,8Z,10E)-eicosatrienoate. The enzyme catalyses (15R)-hydroperoxy-(5Z,8Z,11Z,13E)-eicosatetraenoate = 15-oxo-(5Z,8Z,11Z,13E)-eicosatetraenoate + H2O. It catalyses the reaction (15S)-hydroperoxy-(5Z,8Z,11Z,13E)-eicosatetraenoate = (14S,15S)-epoxy-(5Z,8Z,10E,12E)-eicosatetraenoate + H2O. It carries out the reaction (12S)-hydroperoxy-(5Z,8Z,10E,14Z)-eicosatetraenoate = (8S)-hydroxy-(11S,12S)-epoxy-(5Z,9E,14Z)-eicosatrienoate. The catalysed reaction is (4Z,7Z,10Z,13Z,16Z)-docosapentaenoate + O2 = 14-hydroperoxy-(4Z,7Z,10Z,12E,16Z)-docosapentaenoate. The enzyme catalyses (7Z,10Z,13Z,16Z,19Z)-docosapentaenoate + O2 = 14-hydroperoxy-(7Z,10Z,12E,16Z,19Z)-docosapentaenoate. It catalyses the reaction (4Z,7Z,10Z,13Z,16Z,19Z)-docosahexaenoate + O2 = (14S)-hydroperoxy-(4Z,7Z,10Z,12E,16Z,19Z)-docosahexaenoate. It carries out the reaction (4Z,7Z,10Z,13Z,16Z,19Z)-docosahexaenoate + O2 = (17S)-hydroperoxy-(4Z,7Z,10Z,13Z,15E,19Z)-docosahexaenoate. The catalysed reaction is (7S)-hydroperoxy-(4Z,8E,10Z,13Z,16Z,19Z)-docosahexaenoate + O2 = (7S,14S)-dihydroperoxy-(4Z,8E,10Z,12E,16Z,19Z)-docosahexaenoate. The enzyme catalyses (7S)-hydroperoxy-(4Z,8E,10Z,13Z,16Z,19Z)-docosahexaenoate + O2 = (7S,17S)-dihydroperoxy-(4Z,8E,10Z,13Z,15E,19Z)-docosahexaenoate. It catalyses the reaction (4Z,7Z,10Z,13Z,16Z,19Z)-docosahexaenoate + O2 = (11S)-hydroperoxy-(4Z,7Z,9E,13Z,16Z,19Z)-docosahexaenoate. It carries out the reaction N-(5Z,8Z,11Z,14Z)-eicosatetraenoyl-taurine + O2 = N-(12S)-hydroperoxy-(5Z,8Z,10E,14Z)-eicosatetraenoyl-taurine. The catalysed reaction is N-(5Z,8Z,11Z,14Z)-eicosatetraenoyl-gamma-aminobutanoate + O2 = N-(12S)-hydroperoxy-(5Z,8Z,10E,14Z)-eicosatetraenoyl-gamma-aminobutanoate. The enzyme catalyses N-(5Z,8Z,11Z,14Z)-eicosatetraenoyl-glycine + O2 = N-(12S)-hydroperoxy-(5Z,8Z,10E,14Z)-eicosatetraenoyl-glycine. It catalyses the reaction N-(5Z,8Z,11Z,14Z)-eicosatetraenoyl-L-alanine + O2 = N-(12S)-hydroperoxy-(5Z,8Z,10E,14Z)-eicosatetraenoyl-alanine. It carries out the reaction N-(5Z,8Z,11Z,14Z)-eicosatetraenoyl-taurine + O2 = N-(15S)-hydroperoxy-(5Z,8Z,11Z,13E)-eicosatetraenoyl-taurine. The catalysed reaction is N-(5Z,8Z,11Z,14Z)-eicosatetraenoyl-gamma-aminobutanoate + O2 = N-(15S)-hydroperoxy-(5Z,8Z,11Z,13E)-eicosatetraenoyl-gamma-aminobutanoate. The enzyme catalyses N-(5Z,8Z,11Z,14Z)-eicosatetraenoyl-glycine + O2 = N-(15S)-hydroperoxy-(5Z,8Z,11Z,13E)-eicosatetraenoyl-glycine. It catalyses the reaction N-(5Z,8Z,11Z,14Z)-eicosatetraenoyl-L-alanine + O2 = N-(15S)-hydroperoxy-(5Z,8Z,11Z,13E)-eicosatetraenoyl-alanine. It functions in the pathway lipid metabolism; hydroperoxy eicosatetraenoic acid biosynthesis. In terms of biological role, non-heme iron-containing dioxygenase that catalyzes the stereo-specific peroxidation of free and esterified polyunsaturated fatty acids generating a spectrum of bioactive lipid mediators. It inserts peroxyl groups at C12 or C15 of arachidonate ((5Z,8Z,11Z,14Z)-eicosatetraenoate) producing both 12-hydroperoxyeicosatetraenoate/12-HPETE and 15-hydroperoxyeicosatetraenoate/15-HPETE. It may then act on 12-HPETE to produce hepoxilins, which may show pro-inflammatory properties. Can also peroxidize linoleate ((9Z,12Z)-octadecadienoate) to 13-hydroperoxyoctadecadienoate. May participate in the sequential oxidations of DHA ((4Z,7Z,10Z,13Z,16Z,19Z)-docosahexaenoate) to generate specialized pro-resolving mediators (SPMs)like resolvin D5 ((7S,17S)-diHPDHA) and (7S,14S)-diHPDHA, that actively down-regulate the immune response and have anti-aggregation properties with platelets. Can convert epoxy fatty acids to hydroperoxy-epoxides derivatives followed by an intramolecular nucleophilic substitution leading to the formation of monocyclic endoperoxides. Plays an important role during the maintenance of self-tolerance by peroxidizing membrane-bound phosphatidylethanolamine which can then signal the sorting process for clearance of apoptotic cells during inflammation and prevent an autoimmune response. In addition to its role in the immune and inflammatory responses, this enzyme may play a role in epithelial wound healing in the cornea through production of lipoxin A4 (LXA(4)) and docosahexaenoic acid-derived neuroprotectin D1 (NPD1; 10R,17S-HDHA), both lipid autacoids exhibit anti-inflammatory and neuroprotective properties. Furthermore, it may regulate actin polymerization which is crucial for several biological processes such as the phagocytosis of apoptotic cells. It is also implicated in the generation of endogenous ligands for peroxisome proliferator activated receptor (PPAR-gamma), hence modulating macrophage development and function. It may also exert a negative effect on skeletal development by regulating bone mass through this pathway. As well as participates in ER stress and downstream inflammation in adipocytes, pancreatic islets, and liver. Finally, it is also involved in the cellular response to IL13/interleukin-13. This chain is Polyunsaturated fatty acid lipoxygenase ALOX15, found in Pongo abelii (Sumatran orangutan).